Here is a 204-residue protein sequence, read N- to C-terminus: MMQDVSSSPVSPADDSLSNSEEEPDRQQPPSGKRGGRKRRSSRRSAGGGAGPGGAAGGGVGGGDEPGSPAQGKRGKKSAGCGGGGSAGGGGGGGSSSGGGSPQSYEELQTQRVMANVRERQRTQSLNEAFAALRKIIPTLPSDKLSKIQTLKLAARYIDFLYQVLQSDELDSKMASCSYVAHERFSYAFSVWRMEGAWSMSASH.

Low complexity predominate over residues 1-18 (MMQDVSSSPVSPADDSLS). The tract at residues 1-107 (MMQDVSSSPV…GGGSPQSYEE (107 aa)) is disordered. Basic residues predominate over residues 34 to 43 (RGGRKRRSSR). Composition is skewed to gly residues over residues 46–65 (AGGGAGPGGAAGGGVGGGDE) and 80–101 (GCGGGGSAGGGGGGGSSSGGGS). In terms of domain architecture, bHLH spans 110-161 (TQRVMANVRERQRTQSLNEAFAALRKIIPTLPSDKLSKIQTLKLAARYIDFL). Residues 163–193 (QVLQSDELDSKMASCSYVAHERFSYAFSVWR) are sufficient for transactivation activity.

In terms of assembly, efficient DNA binding requires dimerization with another bHLH protein. Homodimer or heterodimer with E proteins such as TCF3. ID1 binds preferentially to TCF3 but does not interact efficiently with TWIST1 so ID1 levels control the amount of TCF3 available to dimerize with TWIST and thus determine the type of dimer formed.

The protein localises to the nucleus. In terms of biological role, acts as a transcriptional regulator. Inhibits myogenesis by sequestrating E proteins, inhibiting trans-activation by MEF2, and inhibiting DNA-binding by MYOD1 through physical interaction. This interaction probably involves the basic domains of both proteins. Also represses expression of pro-inflammatory cytokines such as TNFA and IL1B. Regulates cranial suture patterning and fusion. Activates transcription as a heterodimer with E proteins. Regulates gene expression differentially, depending on dimer composition. Homodimers induce expression of FGFR2 and POSTN while heterodimers repress FGFR2 and POSTN expression and induce THBS1 expression. Heterodimerization is also required for osteoblast differentiation. Represses the activity of the circadian transcriptional activator: NPAS2-BMAL1 heterodimer. This is Twist-related protein 1 (TWIST1) from Nomascus concolor (Black crested gibbon).